A 354-amino-acid chain; its full sequence is MIDWITSQGHDIFGMYWTPLWILIRAVLIVVPVLLCVAYLILWERKLIGWMHVRIGPNRVGPLGLLQPIADVLKLLLKEVMFPSQINRGMYLVAPLMVLMPAVAVWAVIPFQAEVVMADINAGLLYVMAISSVGVYGVILAGWASNSKYAFIGAMRAAAQMVSYEIAMGFALVTVLMVSGSLNLSHIVNAQNTGYFANMGLNLLSWNWLPLLPMFGVYFISGVAETNRHPFDVVEGESEIVAGHMIEYSGMTFALFFLAEYINMIIISTMTSLMFLGGWAPPFSSALTNAIPGFFWLVIKVFLLLSVFIWIRASFPRYRYDQIMRLGWKIFIPLTVAWLIIVAIWIKSPWNIWH.

Transmembrane regions (helical) follow at residues 22–42 (ILIR…YLIL), 91–111 (YLVA…VIPF), 124–144 (LLYV…AGWA), 162–182 (VSYE…SGSL), 203–223 (LLSW…ISGV), 250–270 (GMTF…ISTM), 291–311 (IPGF…FIWI), and 326–346 (LGWK…AIWI).

The protein belongs to the complex I subunit 1 family. NDH-1 is composed of 14 different subunits. Subunits NuoA, H, J, K, L, M, N constitute the membrane sector of the complex.

Its subcellular location is the cell inner membrane. It catalyses the reaction a quinone + NADH + 5 H(+)(in) = a quinol + NAD(+) + 4 H(+)(out). Its function is as follows. NDH-1 shuttles electrons from NADH, via FMN and iron-sulfur (Fe-S) centers, to quinones in the respiratory chain. The immediate electron acceptor for the enzyme in this species is believed to be ubiquinone. Couples the redox reaction to proton translocation (for every two electrons transferred, four hydrogen ions are translocated across the cytoplasmic membrane), and thus conserves the redox energy in a proton gradient. This subunit may bind ubiquinone. This Cupriavidus metallidurans (strain ATCC 43123 / DSM 2839 / NBRC 102507 / CH34) (Ralstonia metallidurans) protein is NADH-quinone oxidoreductase subunit H.